Consider the following 311-residue polypeptide: Homoserine kinase (311 aa).

Position 96–106 (96–106 (PLARGLGSSAA)) interacts with ATP.

Belongs to the GHMP kinase family. Homoserine kinase subfamily.

Its subcellular location is the cytoplasm. The catalysed reaction is L-homoserine + ATP = O-phospho-L-homoserine + ADP + H(+). Its pathway is amino-acid biosynthesis; L-threonine biosynthesis; L-threonine from L-aspartate: step 4/5. Functionally, catalyzes the ATP-dependent phosphorylation of L-homoserine to L-homoserine phosphate. This chain is Homoserine kinase, found in Natranaerobius thermophilus (strain ATCC BAA-1301 / DSM 18059 / JW/NM-WN-LF).